The following is a 73-amino-acid chain: Translation initiation factor IF-1 (73 aa).

One can recognise an S1-like domain in the interval 1-73 (MGKKEEAFEV…TKGRIVYRER (73 aa)).

The protein belongs to the IF-1 family. Component of the 30S ribosomal translation pre-initiation complex which assembles on the 30S ribosome in the order IF-2 and IF-3, IF-1 and N-formylmethionyl-tRNA(fMet); mRNA recruitment can occur at any time during PIC assembly.

The protein localises to the cytoplasm. Its function is as follows. One of the essential components for the initiation of protein synthesis. Stabilizes the binding of IF-2 and IF-3 on the 30S subunit to which N-formylmethionyl-tRNA(fMet) subsequently binds. Helps modulate mRNA selection, yielding the 30S pre-initiation complex (PIC). Upon addition of the 50S ribosomal subunit IF-1, IF-2 and IF-3 are released leaving the mature 70S translation initiation complex. The polypeptide is Translation initiation factor IF-1 (Rhodopirellula baltica (strain DSM 10527 / NCIMB 13988 / SH1)).